The primary structure comprises 321 residues: Malate dehydrogenase (321 aa).

Residues 10–15 (GAGQIG) and Asp34 contribute to the NAD(+) site. Residues Arg83 and Arg89 each coordinate substrate. NAD(+)-binding positions include Asn96 and 119 to 121 (VTN). Substrate contacts are provided by Asn121 and Arg152. His176 acts as the Proton acceptor in catalysis.

The protein belongs to the LDH/MDH superfamily. MDH type 3 family.

The catalysed reaction is (S)-malate + NAD(+) = oxaloacetate + NADH + H(+). Functionally, catalyzes the reversible oxidation of malate to oxaloacetate. This chain is Malate dehydrogenase, found in Azorhizobium caulinodans (strain ATCC 43989 / DSM 5975 / JCM 20966 / LMG 6465 / NBRC 14845 / NCIMB 13405 / ORS 571).